The following is a 364-amino-acid chain: Succinyl-diaminopimelate desuccinylase (364 aa).

H66 contacts Zn(2+). Residue D68 is part of the active site. D97 is a binding site for Zn(2+). The active-site Proton acceptor is the E127. Residues E128, E156, and H341 each coordinate Zn(2+).

The protein belongs to the peptidase M20A family. DapE subfamily. As to quaternary structure, homodimer. The cofactor is Zn(2+). It depends on Co(2+) as a cofactor.

It carries out the reaction N-succinyl-(2S,6S)-2,6-diaminopimelate + H2O = (2S,6S)-2,6-diaminopimelate + succinate. Its pathway is amino-acid biosynthesis; L-lysine biosynthesis via DAP pathway; LL-2,6-diaminopimelate from (S)-tetrahydrodipicolinate (succinylase route): step 3/3. Its function is as follows. Catalyzes the hydrolysis of N-succinyl-L,L-diaminopimelic acid (SDAP), forming succinate and LL-2,6-diaminopimelate (DAP), an intermediate involved in the bacterial biosynthesis of lysine and meso-diaminopimelic acid, an essential component of bacterial cell walls. In Wolinella succinogenes (strain ATCC 29543 / DSM 1740 / CCUG 13145 / JCM 31913 / LMG 7466 / NCTC 11488 / FDC 602W) (Vibrio succinogenes), this protein is Succinyl-diaminopimelate desuccinylase.